We begin with the raw amino-acid sequence, 319 residues long: Acetyl-coenzyme A carboxylase carboxyl transferase subunit alpha (319 aa).

One can recognise a CoA carboxyltransferase C-terminal domain in the interval 35–296 (NIDEEVHRLR…KAQLLADLAD (262 aa)).

It belongs to the AccA family. In terms of assembly, acetyl-CoA carboxylase is a heterohexamer composed of biotin carboxyl carrier protein (AccB), biotin carboxylase (AccC) and two subunits each of ACCase subunit alpha (AccA) and ACCase subunit beta (AccD).

Its subcellular location is the cytoplasm. It catalyses the reaction N(6)-carboxybiotinyl-L-lysyl-[protein] + acetyl-CoA = N(6)-biotinyl-L-lysyl-[protein] + malonyl-CoA. The protein operates within lipid metabolism; malonyl-CoA biosynthesis; malonyl-CoA from acetyl-CoA: step 1/1. Component of the acetyl coenzyme A carboxylase (ACC) complex. First, biotin carboxylase catalyzes the carboxylation of biotin on its carrier protein (BCCP) and then the CO(2) group is transferred by the carboxyltransferase to acetyl-CoA to form malonyl-CoA. In Klebsiella pneumoniae (strain 342), this protein is Acetyl-coenzyme A carboxylase carboxyl transferase subunit alpha.